A 134-amino-acid chain; its full sequence is Protein Turandot E (134 aa).

An N-terminal signal peptide occupies residues methionine 1–cysteine 38.

The protein belongs to the Turandot family.

It localises to the secreted. A humoral factor that may play a role in stress tolerance. The chain is Protein Turandot E from Drosophila sechellia (Fruit fly).